Consider the following 246-residue polypeptide: Pyridoxine 5'-phosphate synthase (246 aa).

Residue Asn12 participates in 3-amino-2-oxopropyl phosphate binding. 1-deoxy-D-xylulose 5-phosphate is bound at residue 14–15 (DH). Arg23 is a binding site for 3-amino-2-oxopropyl phosphate. His48 functions as the Proton acceptor in the catalytic mechanism. Residues Arg50 and His55 each coordinate 1-deoxy-D-xylulose 5-phosphate. The active-site Proton acceptor is Glu75. Thr105 contributes to the 1-deoxy-D-xylulose 5-phosphate binding site. His196 functions as the Proton donor in the catalytic mechanism. 3-amino-2-oxopropyl phosphate-binding positions include Gly197 and 218 to 219 (GH).

This sequence belongs to the PNP synthase family. As to quaternary structure, homooctamer; tetramer of dimers.

The protein resides in the cytoplasm. It carries out the reaction 3-amino-2-oxopropyl phosphate + 1-deoxy-D-xylulose 5-phosphate = pyridoxine 5'-phosphate + phosphate + 2 H2O + H(+). It functions in the pathway cofactor biosynthesis; pyridoxine 5'-phosphate biosynthesis; pyridoxine 5'-phosphate from D-erythrose 4-phosphate: step 5/5. Functionally, catalyzes the complicated ring closure reaction between the two acyclic compounds 1-deoxy-D-xylulose-5-phosphate (DXP) and 3-amino-2-oxopropyl phosphate (1-amino-acetone-3-phosphate or AAP) to form pyridoxine 5'-phosphate (PNP) and inorganic phosphate. This Nitrosococcus oceani (strain ATCC 19707 / BCRC 17464 / JCM 30415 / NCIMB 11848 / C-107) protein is Pyridoxine 5'-phosphate synthase.